The following is a 362-amino-acid chain: HLA class I histocompatibility antigen, B alpha chain (362 aa).

Residues 1–24 (MLVMAPRTVLLLLSAALALTETWA) form the signal peptide. The segment at 3–11 (VMAPRTVLL) is VL9 epitope. The interval 25–114 (GSHSMRYFYT…LRGYYNQSEA (90 aa)) is alpha-1. Residues 25–309 (GSHSMRYFYT…PSSQSTVPIV (285 aa)) are Extracellular-facing. Residue Asn87 coordinates a peptide antigen. The Bw6 motif motif lies at 101–107 (SLRNLRG). Residue Tyr108 participates in a peptide antigen binding. N-linked (GlcNAc...) asparagine glycosylation is present at Asn110. Positions 115–206 (GSHTLQSMYG…ENGKDKLERA (92 aa)) are alpha-2. A disulfide bridge links Cys125 with Cys188. Residues Thr167, Lys170, Glu176, Tyr183, and Tyr195 each contribute to the a peptide antigen site. Residues 207–298 (DPPKTHVTHH…GLPKPLTLRW (92 aa)) are alpha-3. In terms of domain architecture, Ig-like C1-type spans 209–295 (PKTHVTHHPI…QHEGLPKPLT (87 aa)). A disulfide bridge links Cys227 with Cys283. The tract at residues 299–309 (EPSSQSTVPIV) is connecting peptide. A helical membrane pass occupies residues 310–333 (GIVAGLAVLAVVVIGAVVAAVMCR). The Cytoplasmic segment spans residues 334-362 (RKSSGGKGGSYSQAACSDSAQGSDVSLTA). The disordered stretch occupies residues 337–362 (SGGKGGSYSQAACSDSAQGSDVSLTA). Residues 346-362 (QAACSDSAQGSDVSLTA) are compositionally biased toward polar residues.

Heterotrimer that consists of an alpha chain HLA-B, a beta chain B2M and a peptide (peptide-HLA-B-B2M). Early in biogenesis, HLA-B-B2M dimer interacts with the components of the peptide-loading complex composed of TAPBP, TAP1-TAP2, TAPBPL, PDIA3/ERP57 and CALR. Interacts with TAP1-TAP2 transporter via TAPBP; this interaction is obligatory for the loading of peptide epitopes delivered to the ER by TAP1-TAP2 transporter. Interacts with TAPBPL; TAPBPL binds peptide-free HLA-B-B2M complexes or those loaded with low affinity peptides, likely facilitating peptide exchange for higher affinity peptides. Only optimally assembled peptide-HLA-B-B2M trimer translocates to the surface of antigen-presenting cells, where it interacts with TCR and CD8 coreceptor on the surface of T cells. HLA-B (via polymorphic alpha-1 and alpha-2 domains) interacts with antigen-specific TCR (via CDR1, CDR2 and CDR3 domains). One HLA-B molecule (mainly via nonpolymorphic alpha-3 domain) interacts with one CD8A homodimer (via CDR-like loop); this interaction ensures peptide-HLA-B-B2M recognition by CD8-positive T cells only. Allele B*57:01 interacts (via Bw4 motif) with KIR3DL1 (via Ig-like C2-type domain); this interaction may interfere with peptide binding. Allele B*46:01 interacts with KIR2DL3. In terms of assembly, (Microbial infection) Interacts with HTLV-1 accessory protein p12I.

It is found in the cell membrane. It localises to the endoplasmic reticulum membrane. Antigen-presenting major histocompatibility complex class I (MHCI) molecule. In complex with B2M/beta 2 microglobulin displays primarily viral and tumor-derived peptides on antigen-presenting cells for recognition by alpha-beta T cell receptor (TCR) on HLA-B-restricted CD8-positive T cells, guiding antigen-specific T cell immune response to eliminate infected or transformed cells. May also present self-peptides derived from the signal sequence of secreted or membrane proteins, although T cells specific for these peptides are usually inactivated to prevent autoreactivity. Both the peptide and the MHC molecule are recognized by TCR, the peptide is responsible for the fine specificity of antigen recognition and MHC residues account for the MHC restriction of T cells. Typically presents intracellular peptide antigens of 8 to 13 amino acids that arise from cytosolic proteolysis via constitutive proteasome and IFNG-induced immunoproteasome. Can bind different peptides containing allele-specific binding motifs, which are mainly defined by anchor residues at position 2 and 9. Its function is as follows. Allele B*07:02: Displays peptides sharing a common signature motif, namely a Pro residue at position 2 and mainly a Leu anchor residue at the C-terminus. Presents a long peptide (APRGPHGGAASGL) derived from the cancer-testis antigen CTAG1A/NY-ESO-1, eliciting a polyclonal CD8-positive T cell response against tumor cells. Presents viral epitopes derived from HIV-1 gag-pol (TPQDLNTML) and Nef (RPQVPLRPM). Presents an immunodominant epitope derived from SARS-CoV-2 N/nucleoprotein (SPRWYFYYL). Displays self-peptides including a peptide derived from the signal sequence of HLA-DPB1 (APRTVALTA). Functionally, allele B*08:01: Presents to CD8-positive T cells viral epitopes derived from EBV/HHV-4 EBNA3 (QAKWRLQTL), eliciting cytotoxic T cell response. In terms of biological role, allele B*13:02: Presents multiple HIV-1 epitopes derived from gag (RQANFLGKI, GQMREPRGSDI), nef (RQDILDLWI), gag-pol (RQYDQILIE, GQGQWTYQI) and rev (LQLPPLERL), all having in common a Gln residue at position 2 and mainly hydrophobic amino acids Leu, Ile or Val at the C-terminus. Associated with successful control of HIV-1 infection. Allele B*18:01: Preferentially presents octomeric and nonameric peptides sharing a common motif, namely a Glu at position 2 and Phe or Tyr anchor residues at the C-terminus. Presents an EBV/HHV-4 epitope derived from BZLF1 (SELEIKRY). May present to CD8-positive T cells an antigenic peptide derived from MAGEA3 (MEVDPIGHLY), triggering an anti-tumor immune response. May display a broad repertoire of self-peptides with a preference for peptides derived from RNA-binding proteins. Its function is as follows. Allele B*27:05: Presents to CD8-positive T cells immunodominant viral epitopes derived from HCV POLG (ARMILMTHF), HIV-1 gag (KRWIILGLNK), IAV NP (SRYWAIRTR), SARS-CoV-2 N/nucleoprotein (QRNAPRITF), EBV/HHV-4 EBNA4 (HRCQAIRKK) and EBV/HHV-4 EBNA6 (RRIYDLIEL), conferring longterm protection against viral infection. Can present self-peptides derived from cytosolic and nuclear proteins. All peptides carry an Arg at position 2. The peptide-bound form interacts with NK cell inhibitory receptor KIR3DL1 and inhibits NK cell activation in a peptide-specific way, being particularly sensitive to the nature of the amino acid side chain at position 8 of the antigenic peptide. KIR3DL1 fails to recognize HLA-B*27:05 in complex with B2M and EBV/HHV-4 EBNA6 (RRIYDLIEL) peptide, which can lead to increased activation of NK cells during infection. May present an altered repertoire of peptides in the absence of TAP1-TAP2 and TAPBPL. Functionally, allele B*40:01: Presents immunodominant viral epitopes derived from EBV/HHV-4 LMP2 (IEDPPFNSL) and SARS-CoV-2 N/nucleoprotein (MEVTPSGTWL), triggering memory CD8-positive T cell response. Displays self-peptides sharing a signature motif, namely a Glu at position 2 and a Leu anchor residue at the C-terminus. In terms of biological role, allele B*41:01: Displays self-peptides sharing a signature motif, namely a Glu at position 2 and Ala or Pro anchor residues at the C-terminus. Allele B*44:02: Presents immunodominant viral epitopes derived from EBV/HHV-4 EBNA4 (VEITPYKPTW) and EBNA6 (AEGGVGWRHW, EENLLDFVRF), triggering memory CD8-positive T cell response. Displays self-peptides sharing a signature motif, namely a Glu at position 2 and Phe, Tyr or Trp anchor residues at the C-terminus. Its function is as follows. Allele B*45:01: Displays self-peptides sharing a signature motif, namely a Glu at position 2 and Ala or Pro anchor residues at the C-terminus. Functionally, allele B*46:01: Preferentially presents nonameric peptides sharing a signature motif, namely Ala and Leu at position 2 and Tyr, Phe, Leu, or Met anchor residues at the C-terminus. The peptide-bound form interacts with KIR2DL3 and inhibits NK cell cytotoxic response in a peptide-specific way. In terms of biological role, allele B*47:01: Displays self-peptides sharing a signature motif, namely an Asp at position 2 and Leu or Met anchor residues at the C-terminus. Allele B*49:01: Displays self-peptides sharing a signature motif, namely a Glu at position 2 and Ile or Val anchor residues at the C-terminus. Its function is as follows. Allele B*50:01: Displays self-peptides sharing a signature motif, namely a Glu at position 2 and Ala or Pro anchor residues at the C-terminus. Functionally, allele B*51:01: Presents an octomeric HIV-1 epitope derived from gag-pol (TAFTIPSI) to the public TRAV17/TRBV7-3 TCR clonotype, strongly suppressing HIV-1 replication. In terms of biological role, allele B*54:01: Displays peptides sharing a common signature motif, namely a Pro residue at position 2 and Ala anchor residue at the C-terminus. Allele B*55:01: Displays peptides sharing a common signature motif, namely a Pro residue at position 2 and Ala anchor residue at the C-terminus. Its function is as follows. Allele B*56:01: Displays peptides sharing a common signature motif, namely a Pro residue at position 2 and Ala anchor residue at the C-terminus. Functionally, allele B*57:01: The peptide-bound form recognizes KIR3DL1 and inhibits NK cell cytotoxic response. Presents HIV gag peptides (immunodominant KAFSPEVIPMF and subdominant KALGPAATL epitopes) predominantly to CD8-positive T cell clones expressing a TRAV41-containing TCR, triggering HLA-B-restricted T cell responses. In terms of biological role, allele B*67:01: Displays peptides sharing a common signature motif, namely a Pro residue at position 2 and Leu anchor residue at the C-terminus. The sequence is that of HLA class I histocompatibility antigen, B alpha chain from Homo sapiens (Human).